The primary structure comprises 235 residues: MAKDSTGRMRVTVKSAGRMKLSSKLWLERQLNDPYVAQAKRDGYRSRAAYKLLEIDDKHHFLKPGASVVDLGAAPGGWSQIAAKRVGATEGKGKVVAIDLLEMPEIVGVTFAQLDFLSPAAPEKLLAMIGGRVDVVMSDMAANTTGHRKTDQLRIVGLVEDAAAFACDVLKPGGTFVAKVFQSGADATLMTQLKRDFASVKHLKPQASRKDSSERYVLALGFRGPETTNWSNPPD.

S-adenosyl-L-methionine is bound by residues Gly76, Trp78, Asp99, Asp115, and Asp139. Lys179 acts as the Proton acceptor in catalysis.

This sequence belongs to the class I-like SAM-binding methyltransferase superfamily. RNA methyltransferase RlmE family.

It localises to the cytoplasm. The catalysed reaction is uridine(2552) in 23S rRNA + S-adenosyl-L-methionine = 2'-O-methyluridine(2552) in 23S rRNA + S-adenosyl-L-homocysteine + H(+). Specifically methylates the uridine in position 2552 of 23S rRNA at the 2'-O position of the ribose in the fully assembled 50S ribosomal subunit. This is Ribosomal RNA large subunit methyltransferase E from Rhodopseudomonas palustris (strain BisA53).